The chain runs to 309 residues: Olfactory receptor 5AK2 (309 aa).

Residues 1 to 25 are Extracellular-facing; that stretch reads MTLGNSTEVTEFYLLGFGAQHEFWC. N-linked (GlcNAc...) asparagine glycosylation is present at Asn-5. The helical transmembrane segment at 26-46 threads the bilayer; sequence ILFIVFLLIYVTSIMGNSGII. The Cytoplasmic portion of the chain corresponds to 47–54; it reads LLINTDSR. The chain crosses the membrane as a helical span at residues 55 to 75; that stretch reads FQTLTYFFLQHLAFVDICYTS. Topologically, residues 76–99 are extracellular; that stretch reads AITPKMLQSFTEEKNLMLFQGCVI. An intrachain disulfide couples Cys-97 to Cys-189. The helical transmembrane segment at 100 to 120 threads the bilayer; it reads QFLVYATFATSDCYLLAMMAV. The Cytoplasmic segment spans residues 121-133; sequence DPYVAICKPLHYT. A helical transmembrane segment spans residues 134-154; it reads VIMSRTVCIRLVAGSYIMGSI. Asn-155 carries N-linked (GlcNAc...) asparagine glycosylation. At 155 to 196 the chain is on the extracellular side; the sequence is NASVQTGFTCSLSFCKSNSINHFFCDVPPILALSCSNVDINI. Residues 197–217 form a helical membrane-spanning segment; sequence MLLVVFVGSNLIFTGLVVIFS. Residues 218-237 are Cytoplasmic-facing; that stretch reads YIYIMATILKMSSSAGRKKS. A helical membrane pass occupies residues 238–258; it reads FSTCASHLTAVTIFYGTLSYM. The Extracellular portion of the chain corresponds to 259–271; sequence YLQSHSNNSQENM. Asn-265 carries N-linked (GlcNAc...) asparagine glycosylation. A helical membrane pass occupies residues 272 to 292; that stretch reads KVAFIFYGTVIPMLNPLIYSL. The Cytoplasmic portion of the chain corresponds to 293 to 309; it reads RNKEVKEALKVIGKKLF.

It belongs to the G-protein coupled receptor 1 family.

The protein localises to the cell membrane. Its function is as follows. Odorant receptor. The chain is Olfactory receptor 5AK2 (OR5AK2) from Homo sapiens (Human).